The chain runs to 144 residues: Large ribosomal subunit protein uL13 (144 aa).

Belongs to the universal ribosomal protein uL13 family. As to quaternary structure, part of the 50S ribosomal subunit.

Its function is as follows. This protein is one of the early assembly proteins of the 50S ribosomal subunit, although it is not seen to bind rRNA by itself. It is important during the early stages of 50S assembly. This chain is Large ribosomal subunit protein uL13, found in Lachnoclostridium phytofermentans (strain ATCC 700394 / DSM 18823 / ISDg) (Clostridium phytofermentans).